Reading from the N-terminus, the 1320-residue chain is Phosphoribosylformylglycinamidine synthase (1320 aa).

ATP contacts are provided by residues 310–321 and A686; that span reads GAATGSGGEIRD. Positions 687, 726, 730, and 894 each coordinate Mg(2+). Residue S896 coordinates ATP. The Glutamine amidotransferase type-1 domain occupies 1067-1320; it reads VAILREQGVN…MFRNARAFIG (254 aa). The Nucleophile role is filled by C1160. Active-site residues include H1285 and E1287.

In the N-terminal section; belongs to the FGAMS family. In terms of assembly, monomer.

Its subcellular location is the cytoplasm. It carries out the reaction N(2)-formyl-N(1)-(5-phospho-beta-D-ribosyl)glycinamide + L-glutamine + ATP + H2O = 2-formamido-N(1)-(5-O-phospho-beta-D-ribosyl)acetamidine + L-glutamate + ADP + phosphate + H(+). It functions in the pathway purine metabolism; IMP biosynthesis via de novo pathway; 5-amino-1-(5-phospho-D-ribosyl)imidazole from N(2)-formyl-N(1)-(5-phospho-D-ribosyl)glycinamide: step 1/2. Functionally, phosphoribosylformylglycinamidine synthase involved in the purines biosynthetic pathway. Catalyzes the ATP-dependent conversion of formylglycinamide ribonucleotide (FGAR) and glutamine to yield formylglycinamidine ribonucleotide (FGAM) and glutamate. In Colwellia psychrerythraea (strain 34H / ATCC BAA-681) (Vibrio psychroerythus), this protein is Phosphoribosylformylglycinamidine synthase.